Consider the following 265-residue polypeptide: Phosphonates import ATP-binding protein PhnC 1 (265 aa).

The ABC transporter domain occupies 3 to 247 (LRLSAIDLRH…HLDTLYANEQ (245 aa)). 36–43 (GPSGAGKT) serves as a coordination point for ATP.

Belongs to the ABC transporter superfamily. Phosphonates importer (TC 3.A.1.9.1) family. As to quaternary structure, the complex is composed of two ATP-binding proteins (PhnC), two transmembrane proteins (PhnE) and a solute-binding protein (PhnD).

It localises to the cell inner membrane. The catalysed reaction is phosphonate(out) + ATP + H2O = phosphonate(in) + ADP + phosphate + H(+). Part of the ABC transporter complex PhnCDE involved in phosphonates import. Responsible for energy coupling to the transport system. This Pseudomonas syringae pv. tomato (strain ATCC BAA-871 / DC3000) protein is Phosphonates import ATP-binding protein PhnC 1.